Here is a 223-residue protein sequence, read N- to C-terminus: Uracil-DNA glycosylase (223 aa).

D67 serves as the catalytic Proton acceptor.

The protein belongs to the uracil-DNA glycosylase (UDG) superfamily. UNG family.

Its subcellular location is the cytoplasm. It carries out the reaction Hydrolyzes single-stranded DNA or mismatched double-stranded DNA and polynucleotides, releasing free uracil.. Excises uracil residues from the DNA which can arise as a result of misincorporation of dUMP residues by DNA polymerase or due to deamination of cytosine. The sequence is that of Uracil-DNA glycosylase from Borrelia duttonii (strain Ly).